Here is a 274-residue protein sequence, read N- to C-terminus: Large ribosomal subunit protein uL2 (274 aa).

Disordered stretches follow at residues 30–54 (EKSL…IRHK) and 223–274 (VAMN…QLKG). Over residues 36-48 (GKKSSGGRNNNGR) the composition is skewed to low complexity. The span at 263–274 (KFSDKYIKQLKG) shows a compositional bias: basic and acidic residues.

Belongs to the universal ribosomal protein uL2 family. As to quaternary structure, part of the 50S ribosomal subunit. Forms a bridge to the 30S subunit in the 70S ribosome.

Its function is as follows. One of the primary rRNA binding proteins. Required for association of the 30S and 50S subunits to form the 70S ribosome, for tRNA binding and peptide bond formation. It has been suggested to have peptidyltransferase activity; this is somewhat controversial. Makes several contacts with the 16S rRNA in the 70S ribosome. The sequence is that of Large ribosomal subunit protein uL2 from Wolbachia sp. subsp. Brugia malayi (strain TRS).